The primary structure comprises 121 residues: Small ribosomal subunit protein uS13 (121 aa).

The interval 91–121 is disordered; sequence HRMSLPVRGQRTRTNARTRRGSRKTVAGRKK. Positions 100–121 are enriched in basic residues; the sequence is QRTRTNARTRRGSRKTVAGRKK.

The protein belongs to the universal ribosomal protein uS13 family. In terms of assembly, part of the 30S ribosomal subunit. Forms a loose heterodimer with protein S19. Forms two bridges to the 50S subunit in the 70S ribosome.

Functionally, located at the top of the head of the 30S subunit, it contacts several helices of the 16S rRNA. In the 70S ribosome it contacts the 23S rRNA (bridge B1a) and protein L5 of the 50S subunit (bridge B1b), connecting the 2 subunits; these bridges are implicated in subunit movement. Contacts the tRNAs in the A and P-sites. The chain is Small ribosomal subunit protein uS13 from Prochlorococcus marinus (strain MIT 9211).